The primary structure comprises 469 residues: Neuraminidase (469 aa).

Topologically, residues 1-9 are intravirion; the sequence is MNPNQKIIT. Residues 10 to 30 form a helical membrane-spanning segment; sequence IGSVSLTIATVCFLMQIAILV. The interval 11-33 is involved in apical transport and lipid raft association; it reads GSVSLTIATVCFLMQIAILVTTV. The Virion surface portion of the chain corresponds to 31–469; sequence TTVTLHFKQH…DGANINFMPI (439 aa). The hypervariable stalk region stretch occupies residues 36–88; the sequence is HFKQHECDSPASNQVMPCEPIIIERNITEIVYLNNTTIEKEICPEVVEYRNWS. N-linked (GlcNAc...) asparagine; by host glycosylation is found at asparagine 61, asparagine 69, asparagine 70, and asparagine 86. The segment at 91 to 469 is head of neuraminidase; sequence QCQITGFAPF…DGANINFMPI (379 aa). 8 cysteine pairs are disulfide-bonded: cysteine 92–cysteine 417, cysteine 124–cysteine 129, cysteine 183–cysteine 230, cysteine 232–cysteine 237, cysteine 278–cysteine 291, cysteine 280–cysteine 289, cysteine 318–cysteine 337, and cysteine 421–cysteine 447. Arginine 118 lines the substrate pocket. Residue asparagine 146 is glycosylated (N-linked (GlcNAc...) asparagine; by host). Aspartate 151 acts as the Proton donor/acceptor in catalysis. Position 152 (arginine 152) interacts with substrate. 2 N-linked (GlcNAc...) asparagine; by host glycosylation sites follow: asparagine 200 and asparagine 234. Position 276–277 (276–277) interacts with substrate; the sequence is EE. Substrate is bound at residue arginine 292. Aspartate 293, glycine 297, and aspartate 324 together coordinate Ca(2+). Positions 324-350 are disordered; that stretch reads DTPRNDDRSSNSNCRNPNNERGNPGVK. Over residues 333–347 the composition is skewed to low complexity; the sequence is SNSNCRNPNNERGNP. Arginine 371 is a binding site for substrate. Asparagine 402 is a glycosylation site (N-linked (GlcNAc...) asparagine; by host). Residue tyrosine 406 is the Nucleophile of the active site.

This sequence belongs to the glycosyl hydrolase 34 family. In terms of assembly, homotetramer. Requires Ca(2+) as cofactor. In terms of processing, N-glycosylated.

The protein localises to the virion membrane. Its subcellular location is the host apical cell membrane. The enzyme catalyses Hydrolysis of alpha-(2-&gt;3)-, alpha-(2-&gt;6)-, alpha-(2-&gt;8)- glycosidic linkages of terminal sialic acid residues in oligosaccharides, glycoproteins, glycolipids, colominic acid and synthetic substrates.. Inhibited by the neuraminidase inhibitors zanamivir (Relenza) and oseltamivir (Tamiflu). These drugs interfere with the release of progeny virus from infected cells and are effective against all influenza strains. Resistance to neuraminidase inhibitors is quite rare. Functionally, catalyzes the removal of terminal sialic acid residues from viral and cellular glycoconjugates. Cleaves off the terminal sialic acids on the glycosylated HA during virus budding to facilitate virus release. Additionally helps virus spread through the circulation by further removing sialic acids from the cell surface. These cleavages prevent self-aggregation and ensure the efficient spread of the progeny virus from cell to cell. Otherwise, infection would be limited to one round of replication. Described as a receptor-destroying enzyme because it cleaves a terminal sialic acid from the cellular receptors. May facilitate viral invasion of the upper airways by cleaving the sialic acid moieties on the mucin of the airway epithelial cells. Likely to plays a role in the budding process through its association with lipid rafts during intracellular transport. May additionally display a raft-association independent effect on budding. Plays a role in the determination of host range restriction on replication and virulence. Sialidase activity in late endosome/lysosome traffic seems to enhance virus replication. This is Neuraminidase from Aves (Human).